The chain runs to 507 residues: ATP synthase subunit alpha, chloroplastic (507 aa).

170-177 (GDRQTGKT) lines the ATP pocket.

The protein belongs to the ATPase alpha/beta chains family. As to quaternary structure, F-type ATPases have 2 components, CF(1) - the catalytic core - and CF(0) - the membrane proton channel. CF(1) has five subunits: alpha(3), beta(3), gamma(1), delta(1), epsilon(1). CF(0) has four main subunits: a, b, b' and c.

The protein localises to the plastid. The protein resides in the chloroplast thylakoid membrane. The catalysed reaction is ATP + H2O + 4 H(+)(in) = ADP + phosphate + 5 H(+)(out). In terms of biological role, produces ATP from ADP in the presence of a proton gradient across the membrane. The alpha chain is a regulatory subunit. This Illicium oligandrum (Star anise) protein is ATP synthase subunit alpha, chloroplastic.